The following is a 327-amino-acid chain: Aspartate--ammonia ligase (327 aa).

This sequence belongs to the class-II aminoacyl-tRNA synthetase family. AsnA subfamily.

It is found in the cytoplasm. It catalyses the reaction L-aspartate + NH4(+) + ATP = L-asparagine + AMP + diphosphate + H(+). The protein operates within amino-acid biosynthesis; L-asparagine biosynthesis; L-asparagine from L-aspartate (ammonia route): step 1/1. The protein is Aspartate--ammonia ligase of Bacillus cereus (strain ATCC 10987 / NRS 248).